Here is a 1460-residue protein sequence, read N- to C-terminus: Centrosomal protein of 164 kDa (1460 aa).

Positions 1–194 (MAGRPLRIGD…PSQGLKTSAY (194 aa)) are interaction with ATRIP. Residues 56–89 (APLPGEWKPCQDITGDIYYFNFANGQSMWDHPCD) enclose the WW domain. Residues 107–135 (GAIKKKKKKKEKKDKKDRDPPKSSLALGS) form a disordered region. Residues 109 to 119 (IKKKKKKKEKK) show a composition bias toward basic residues. Serine 186 carries the post-translational modification Phosphoserine; by ATR and ATM. Serine 201 is subject to Phosphoserine. Disordered stretches follow at residues 213–412 (GLGE…HGLD), 440–593 (AQQP…AALK), and 658–719 (EEAR…QKNR). Residues 217-227 (ETNEEDEEESD) are compositionally biased toward acidic residues. The segment covering 256–270 (ESLRTSQPEEKKDVS) has biased composition (basic and acidic residues). The segment covering 285–296 (SSPGADSSLSSA) has biased composition (low complexity). Basic and acidic residues-rich tracts occupy residues 310–323 (LPEKEENEKSEPKI) and 357–367 (EGSRREEAAKE). The span at 453-464 (QSSQDELQSKQS) shows a compositional bias: low complexity. Over residues 465 to 481 (KGLEERLSPPLPHEERA) the composition is skewed to basic and acidic residues. Residues 514–525 (SAASLSLQLSLQ) show a composition bias toward low complexity. Residues 537–546 (EKGKEQHSQA) are compositionally biased toward basic and acidic residues. Serine 566 is subject to Phosphoserine. 2 stretches are compositionally biased toward basic and acidic residues: residues 658–668 (EEARMREEESQ) and 686–719 (DQIRAEQEASLQKLREELESQQKAERASLEQKNR). A coiled-coil region spans residues 1154-1206 (GIKALEDMRKNLEKETRHLDEMKSAMRKGHNLLKKKEEKLNQLESSLWEEASD). Residues 1290 to 1310 (PPPLLASMPAQLPPRDPKSTP) are disordered. Phosphoserine is present on residues serine 1386, serine 1388, and serine 1443.

In terms of assembly, interacts (via N-terminus) with ATRIP. Interacts with ATM, ATR and MDC1. Interacts with XPA (via N-terminus) upon UV irradiation. Interacts with CEP83, CCDC92, TTBK2, DVL3, NPHP3 and weakly with NPHP4. Interacts with DZIP1. Post-translationally, phosphorylation at Ser-186 is induced upon DNA-damage caused by treatment with IR irradiation, UV irradiation, hydroxyurea or amphidicolin. Also MDC1-mediated chromatin remodeling is critical for DNA damage-induced phosphorylation. As to expression, expressed in several cell lines.

It localises to the cytoplasm. The protein localises to the cytoskeleton. It is found in the microtubule organizing center. Its subcellular location is the centrosome. The protein resides in the centriole. It localises to the nucleus. Functionally, plays a role in microtubule organization and/or maintenance for the formation of primary cilia (PC), a microtubule-based structure that protrudes from the surface of epithelial cells. Plays a critical role in G2/M checkpoint and nuclear divisions. A key player in the DNA damage-activated ATR/ATM signaling cascade since it is required for the proper phosphorylation of H2AX, RPA, CHEK2 and CHEK1. Plays a critical role in chromosome segregation, acting as a mediator required for the maintenance of genomic stability through modulation of MDC1, RPA and CHEK1. The polypeptide is Centrosomal protein of 164 kDa (CEP164) (Homo sapiens (Human)).